The chain runs to 576 residues: Arginine--tRNA ligase (576 aa).

The 'HIGH' region signature appears at 128 to 136; sequence PTGPMHIGH.

Belongs to the class-I aminoacyl-tRNA synthetase family. As to quaternary structure, monomer.

It localises to the cytoplasm. The catalysed reaction is tRNA(Arg) + L-arginine + ATP = L-arginyl-tRNA(Arg) + AMP + diphosphate. This Rickettsia conorii (strain ATCC VR-613 / Malish 7) protein is Arginine--tRNA ligase.